Reading from the N-terminus, the 614-residue chain is WD repeat-containing protein 26 (614 aa).

Low complexity-rich tracts occupy residues 1–19 and 34–44; these read MQAN…AGSG and SNGVLSSNNGL. Residues 1–65 are disordered; sequence MQANGAAAAA…PGGRKKKRLS (65 aa). The LisH domain occupies 67-99; the sequence is ADEDVIRLIGQHLHGLGLNQTVDLLMQESGCRL. The 85-residue stretch at 100–184 folds into the CTLH domain; it reads EHPSATKFRN…EYLEDGKVLE (85 aa). 6 WD repeats span residues 306-345, 352-391, 397-437, 477-516, 519-561, and 564-604; these read EHCN…HQLK, GHAY…GELR, SHED…DSWE, QEDH…LVRK, GVTQ…PIAE, and GHTR…DNQE.

In terms of assembly, forms homooligomers. Identified in the CTLH complex that contains at least MAEA, RMND5A (or alternatively its paralog RMND5B), GID8, WDR26, and RANBP9 and/or RANBP10. Interacts with DDB1-CUL4A/B E3 ligase complexes.

It is found in the cytoplasm. Its subcellular location is the nucleus. The protein localises to the mitochondrion. Its function is as follows. G-beta-like protein involved in cell signal transduction. Acts as a negative regulator in MAPK signaling pathway. Functions as a scaffolding protein to promote G beta:gamma-mediated PLCB2 plasma membrane translocation and subsequent activation in leukocytes. Core component of the CTLH E3 ubiquitin-protein ligase complex that mediates ubiquitination and subsequent proteasomal degradation of target proteins. Acts as a negative regulator of the canonical Wnt signaling pathway through preventing ubiquitination of beta-catenin CTNNB1 by the beta-catenin destruction complex, thus negatively regulating CTNNB1 degradation. Serves as a scaffold to coordinate PI3K/AKT pathway-driven cell growth and migration. Protects cells from oxidative stress-induced apoptosis via the down-regulation of AP-1 transcriptional activity as well as by inhibiting cytochrome c release from mitochondria. Also protects cells by promoting hypoxia-mediated autophagy and mitophagy. The polypeptide is WD repeat-containing protein 26 (wdr26) (Xenopus tropicalis (Western clawed frog)).